The primary structure comprises 274 residues: SPbeta prophage-derived UPF0714 protein YoqZ (274 aa).

This sequence belongs to the UPF0714 family.

The polypeptide is SPbeta prophage-derived UPF0714 protein YoqZ (yoqZ) (Bacillus subtilis (strain 168)).